A 477-amino-acid polypeptide reads, in one-letter code: Calcium uptake protein 1, mitochondrial (477 aa).

The N-terminal 33 residues, 1 to 33, are a transit peptide targeting the mitochondrion; that stretch reads MFRLNALSALAELAVGSRWYHGTSQPTQTKRRL. Positions 55 to 108 are disordered; the sequence is AHAESPPSVNSKKTDAGDKGKSKDTREVSSHEGSAADTAAEPYPEEKKKKRSGF. Basic and acidic residues predominate over residues 66–84; it reads KKTDAGDKGKSKDTREVSS. The polybasic region stretch occupies residues 101–112; that stretch reads KKKKRSGFRDRK. Phosphoserine is present on S124. The k/R-ring stretch occupies residues 128 to 131; the sequence is KIFR. An EF-hand 1 domain is found at 220–255; that stretch reads TPQRNFEIAFKMFDLNGDGEVDMEEFEQVQSIIRSQ. Residues D233, N235, D237, E239, and E244 each coordinate Ca(2+). A k/R-ring region spans residues 261 to 265; the sequence is RHRDR. Positions 356 to 376 constitute an EF-hand 2; degenerate domain; sequence KDGKGLTFQEVENFFTFLKNI. Residues 410 to 445 form the EF-hand 3 domain; that stretch reads LSDHVCDVVFALFDCDGNGELSNKEFVSIMKQRLMR. D423, D425, N427, E429, and E434 together coordinate Ca(2+). At R457 the chain carries Asymmetric dimethylarginine. Positions 457–467 are C-helix region; the sequence is RLMQAMWKCAQ.

It belongs to the MICU1 family. MICU1 subfamily. Heterodimer; disulfide-linked; heterodimerizes with MICU2 or MICU3. Homodimer; disulfide-linked. Component of the uniplex complex, composed of MCU, EMRE/SMDT1, MICU1 and MICU2 (or MICU3) in a 4:4:1:1 stoichiometry. The composition of calcium sensors within the uniplex complex can differ depending on tissues: a MICU1 homodimer can be present instead of the MICU1-MICU2 heterodimer in skeletal-muscle and kidney. MICU1 is recruited to the uniplex complex by EMRE/SMDT1, and it associates with MCU at low calcium levels, occluding the pore of the MCU channel. Associates with the MICOS complex. Interacts with SLC25A23. Interacts with CHCHD4/MIA40; which introduces the interchain disulfide bond with MICU2. Interacts (when methylated) with UCP2; leading to decrease the calcium sensitivity of MICU1. Phosphorylation at Ser-124 by AKT1 impairs its maturation and stability. Post-translationally, asymmetric dimethylation at Arg-457 by PRMT1 decreases the calcium sensitivity of MICU1 by promoting interaction with UCP2. In terms of processing, degraded by YME1L1 when not complexed as homodimer or heterodimer. Not degraded when complexed as homodimer or heterodimer; the presence of the interchain disulfide bond protecting MICU1 from degradation by YME1L1.

It is found in the mitochondrion intermembrane space. It localises to the mitochondrion inner membrane. In terms of biological role, calcium sensor of the mitochondrial calcium uniporter (MCU) channel, which senses calcium level via its EF-hand domains. MICU1 and MICU2 (or MICU3) form a disulfide-linked heterodimer that stimulates and inhibits MCU activity, depending on the concentration of calcium. At low calcium levels, MICU1 occludes the pore of the MCU channel, preventing mitochondrial calcium uptake. At higher calcium levels, calcium-binding to MICU1 and MICU2 (or MICU3) induces a conformational change that weakens MCU-MICU1 interactions and moves the MICU1-MICU2 heterodimer away from the pore, allowing calcium permeation through the MCU channel. Also required to protect against manganese toxicity by preventing manganese uptake by MCU: mechanistically, manganese-binding to its EF-hand domains does not induce any conformational change, maintaining MCU pore occlusion. Acts as a regulator of mitochondrial cristae structure independently of its ability to regulate the mitochondrial calcium uniporter channel. Regulates glucose-dependent insulin secretion in pancreatic beta-cells by regulating mitochondrial calcium uptake. Induces T-helper 1-mediated autoreactivity, which is accompanied by the release of IFNG. The sequence is that of Calcium uptake protein 1, mitochondrial (Micu1) from Rattus norvegicus (Rat).